Here is a 260-residue protein sequence, read N- to C-terminus: DNA-directed RNA polymerase subunit Rpo3 (260 aa).

This sequence belongs to the archaeal Rpo3/eukaryotic RPB3 RNA polymerase subunit family. In terms of assembly, part of the RNA polymerase complex.

The protein resides in the cytoplasm. It catalyses the reaction RNA(n) + a ribonucleoside 5'-triphosphate = RNA(n+1) + diphosphate. In terms of biological role, DNA-dependent RNA polymerase (RNAP) catalyzes the transcription of DNA into RNA using the four ribonucleoside triphosphates as substrates. This chain is DNA-directed RNA polymerase subunit Rpo3, found in Pyrobaculum aerophilum (strain ATCC 51768 / DSM 7523 / JCM 9630 / CIP 104966 / NBRC 100827 / IM2).